The chain runs to 307 residues: tRNA dimethylallyltransferase (307 aa).

Residue 9-16 (GPTAVGKT) participates in ATP binding. 11-16 (TAVGKT) provides a ligand contact to substrate. The interval 34-37 (DSMQ) is interaction with substrate tRNA.

This sequence belongs to the IPP transferase family. As to quaternary structure, monomer. Mg(2+) is required as a cofactor.

It catalyses the reaction adenosine(37) in tRNA + dimethylallyl diphosphate = N(6)-dimethylallyladenosine(37) in tRNA + diphosphate. Its function is as follows. Catalyzes the transfer of a dimethylallyl group onto the adenine at position 37 in tRNAs that read codons beginning with uridine, leading to the formation of N6-(dimethylallyl)adenosine (i(6)A). The polypeptide is tRNA dimethylallyltransferase (Levilactobacillus brevis (strain ATCC 367 / BCRC 12310 / CIP 105137 / JCM 1170 / LMG 11437 / NCIMB 947 / NCTC 947) (Lactobacillus brevis)).